A 708-amino-acid polypeptide reads, in one-letter code: tRNA(Met) cytidine acetyltransferase TmcA (708 aa).

ATP-binding positions include Q189, 215–224 (GRGKTSALGL), and R357. The 177-residue stretch at 398–574 (PECVEQPERL…YSLLMVRGEH (177 aa)) folds into the N-acetyltransferase domain. Acetyl-CoA-binding positions include 502–504 (IAV) and 509–515 (QRQGIGS).

It belongs to the RNA cytidine acetyltransferase family. TmcA subfamily.

It is found in the cytoplasm. The enzyme catalyses cytidine(34) in elongator tRNA(Met) + acetyl-CoA + ATP + H2O = N(4)-acetylcytidine(34) in elongator tRNA(Met) + ADP + phosphate + CoA + H(+). Its function is as follows. Catalyzes the formation of N(4)-acetylcytidine (ac(4)C) at the wobble position of tRNA(Met), by using acetyl-CoA as an acetyl donor and ATP (or GTP). The chain is tRNA(Met) cytidine acetyltransferase TmcA from Vibrio cholerae serotype O1 (strain ATCC 39315 / El Tor Inaba N16961).